The following is a 165-amino-acid chain: Phosphopantetheine adenylyltransferase (165 aa).

Residue Ser-9 participates in substrate binding. ATP is bound by residues Ser-9–Phe-10 and His-17. 3 residues coordinate substrate: Lys-41, Ile-75, and Arg-89. ATP is bound by residues Gly-90–Arg-92, Glu-100, and Tyr-125–Asp-131.

This sequence belongs to the bacterial CoaD family. In terms of assembly, homohexamer. The cofactor is Mg(2+).

The protein localises to the cytoplasm. The catalysed reaction is (R)-4'-phosphopantetheine + ATP + H(+) = 3'-dephospho-CoA + diphosphate. It functions in the pathway cofactor biosynthesis; coenzyme A biosynthesis; CoA from (R)-pantothenate: step 4/5. Reversibly transfers an adenylyl group from ATP to 4'-phosphopantetheine, yielding dephospho-CoA (dPCoA) and pyrophosphate. The chain is Phosphopantetheine adenylyltransferase from Borrelia hermsii (strain HS1 / DAH).